A 33-amino-acid chain; its full sequence is Pardaxin P-3 (33 aa).

The protein belongs to the pardaxin family. As to quaternary structure, in aqueous solution exists as a tetramer.

The protein resides in the secreted. It is found in the target cell membrane. Its function is as follows. Exhibits unusual shark repellent and surfactant properties. Forms voltage-dependent, ion-permeable channels in membranes. At high concentration causes cell membrane lysis. In Pardachirus pavoninus (Peacock sole), this protein is Pardaxin P-3.